The sequence spans 509 residues: Glutamyl-tRNA(Gln) amidotransferase subunit A (509 aa).

Active-site charge relay system residues include lysine 75 and serine 150. The Acyl-ester intermediate role is filled by serine 174. The tract at residues 471-509 (DWHKRRPPLGQPPLEQAQGTAQQPKAKSKSTKGSKKSKS) is disordered. Residues 496–509 (AKSKSTKGSKKSKS) show a composition bias toward basic residues.

This sequence belongs to the amidase family. GatA subfamily. In terms of assembly, heterotrimer of A, B and C subunits.

The catalysed reaction is L-glutamyl-tRNA(Gln) + L-glutamine + ATP + H2O = L-glutaminyl-tRNA(Gln) + L-glutamate + ADP + phosphate + H(+). Its function is as follows. Allows the formation of correctly charged Gln-tRNA(Gln) through the transamidation of misacylated Glu-tRNA(Gln) in organisms which lack glutaminyl-tRNA synthetase. The reaction takes place in the presence of glutamine and ATP through an activated gamma-phospho-Glu-tRNA(Gln). The protein is Glutamyl-tRNA(Gln) amidotransferase subunit A of Synechococcus sp. (strain JA-3-3Ab) (Cyanobacteria bacterium Yellowstone A-Prime).